A 185-amino-acid polypeptide reads, in one-letter code: p53 apoptosis effector related to PMP-22 (185 aa).

Transmembrane regions (helical) follow at residues 13-33 (WILP…IAAQ), 74-94 (VAAL…ISLV), 105-125 (LPFI…ALII), and 143-163 (WAYG…ILFC).

This sequence belongs to the TMEM47 family.

It is found in the cell junction. The protein resides in the desmosome. Its subcellular location is the cell membrane. The protein localises to the cytoplasm. Its function is as follows. Component of intercellular desmosome junctions. Positively regulates apoptosis in the early-stage embryo in response to UV irradiation, this is partially dependent on tp53 activation. Required for the survival of cell populations in the developing notochord and skin, therefore required for normal embryogenesis beyond 30 hpf. Acts as a positive regulator of endothelial cell apoptosis in response to blood flow-derived shear stress. This is p53 apoptosis effector related to PMP-22 from Danio rerio (Zebrafish).